The primary structure comprises 168 residues: DAZ-associated protein 2 (168 aa).

Over residues 1 to 13 (MNSKGQYPTQPTY) the composition is skewed to low complexity. The disordered stretch occupies residues 1-25 (MNSKGQYPTQPTYPVQPPGNPVYPQ). The PPAY signature appears at 39–42 (PPAY). At serine 77 the chain carries Phosphoserine.

As to quaternary structure, interacts with SOX6. Interacts with DAZ1 and DAZL. Interacts with IL17RB. May interact with FAM168B. Interacts with INCA1. Interacts with EIF4G1 and EIF4G2. Interacts (via PPAY motif) with NEDD4 (via WW domains). Interacts with transcription factor TCF4; the interaction results in localization of DAZAP2 to the nucleus. Interacts with transcription factors TCF7 and TCF7L1. Interacts with transcription factor LEF1. Interacts with serine/threonine-protein kinase HIPK2; the interaction results in phosphorylation of DAZAP2 which causes localization of DAZAP2 to the nucleus, reduces interaction of DAZAP2 with HIPK2 and prevents DAZAP2-dependent degradation of HIPK2. Interacts with ubiquitin ligase SIAH1; the interaction is decreased following phosphorylation of DAZAP2 by HIPK2. Interacts with TP53; the interaction is triggered by DNA damage. In terms of processing, ubiquitinated by SMURF2, leading to proteasomal degradation. Ubiquitinated by NEDD4, leading to proteasomal degradation. Post-translationally, following DNA damage, phosphorylated by HIPK2 which promotes DAZAP2 localization to the nucleus, reduces interaction of DAZAP2 with HIPK2 and SIAH1, and prevents DAZAP2-dependent ubiquitination of HIPK2 by E3 ubiquitin-protein ligase SIAH1 and subsequent HIPK2 proteasomal degradation.

The protein resides in the cytoplasm. The protein localises to the nucleus. It is found in the nucleus speckle. It localises to the nuclear body. Its subcellular location is the stress granule. In terms of biological role, in unstressed cells, promotes SIAH1-mediated polyubiquitination and degradation of the serine/threonine-protein kinase HIPK2, probably by acting as a loading factor that potentiates complex formation between HIPK2 and ubiquitin ligase SIAH1. In response to DNA damage, localizes to the nucleus following phosphorylation by HIPK2 and modulates the expression of a subset of TP53/p53 target genes by binding to TP53 at target gene promoters. This limits the expression of a number of cell death-mediating TP53 target genes, reducing DNA damage-induced cell death. Enhances the binding of transcription factor TCF7L2/TCF4, a Wnt signaling pathway effector, to the promoters of target genes. Plays a role in stress granule formation. This chain is DAZ-associated protein 2, found in Macaca fascicularis (Crab-eating macaque).